We begin with the raw amino-acid sequence, 285 residues long: Protein phosphatase 1 regulatory subunit 3B (285 aa).

A PP1-binding motif motif is present at residues 62 to 65 (RVSF). Residues 125–233 (RNRLQADHVC…SNRGKNYRII (109 aa)) form the CBM21 domain. Phosphoserine is present on Ser261.

As to quaternary structure, interacts with glycogen, PPP1CC catalytic subunit of PP1 and PYGL. Associates with glycogen particles. Forms complexes with debranching enzyme, glycogen phosphorylase, glycogen synthase and phosphorylase kinase which is necessary for its regulation of PP1 activity. As to expression, highly expressed in the liver and, at lower levels, in skeletal muscle, including in vastus lateralis, gastrocnemius and soleus (at protein level). Highest mRNA levels are observed in skeletal muscle, and only moderate levels in liver and heart. Weak expression in placenta and lung.

Functionally, acts as a glycogen-targeting subunit for phosphatase PP1. Facilitates interaction of the PP1 with enzymes of the glycogen metabolism and regulates its activity. Suppresses the rate at which PP1 dephosphorylates (inactivates) glycogen phosphorylase and enhances the rate at which it activates glycogen synthase and therefore limits glycogen breakdown. Its activity is inhibited by PYGL, resulting in inhibition of the glycogen synthase and glycogen phosphorylase phosphatase activities of PP1. Dramatically increases basal and insulin-stimulated glycogen synthesis upon overexpression in hepatocytes. This is Protein phosphatase 1 regulatory subunit 3B (PPP1R3B) from Homo sapiens (Human).